A 150-amino-acid polypeptide reads, in one-letter code: AN1-type zinc finger protein TMC1 (150 aa).

Residues 1-82 form a disordered region; it reads MSDINEIEIP…TKKTTKKKKK (82 aa). S2 is subject to N-acetylserine. Basic and acidic residues predominate over residues 23–33; it reads DPMHEIEDKST. Residues S43 and S54 each carry the phosphoserine modification. Low complexity predominate over residues 53–70; sequence NSRSSSNSSVTSTGQSSR. Over residues 71-82 the composition is skewed to basic residues; sequence RVTKKTTKKKKK. Residues 79–128 form an AN1-type zinc finger; sequence KKKKNACYFDTCSSAASKFIGDCNFCKGHFCSKHRLMENHACNGLTSCKE. The Zn(2+) site is built by C85, C90, C101, C104, C109, H112, H118, and C120.

The protein resides in the nucleus. Functionally, may have a role in protecting cells from metalloid-induced proteotoxicity. The protein is AN1-type zinc finger protein TMC1 of Saccharomyces cerevisiae (strain ATCC 204508 / S288c) (Baker's yeast).